We begin with the raw amino-acid sequence, 199 residues long: Small ribosomal subunit protein uS4 (199 aa).

An S4 RNA-binding domain is found at 91 to 154 (SRLDNVVYRL…KDLIIVKEAL (64 aa)).

The protein belongs to the universal ribosomal protein uS4 family. As to quaternary structure, part of the 30S ribosomal subunit. Contacts protein S5. The interaction surface between S4 and S5 is involved in control of translational fidelity.

Functionally, one of the primary rRNA binding proteins, it binds directly to 16S rRNA where it nucleates assembly of the body of the 30S subunit. In terms of biological role, with S5 and S12 plays an important role in translational accuracy. This Phytoplasma mali (strain AT) protein is Small ribosomal subunit protein uS4.